The primary structure comprises 267 residues: Phosphonates import ATP-binding protein PhnC 1 (267 aa).

Residues 3 to 247 (LSLDGVDLVH…ALDALYANEQ (245 aa)) enclose the ABC transporter domain. 36 to 43 (GPSGAGKT) lines the ATP pocket.

Belongs to the ABC transporter superfamily. Phosphonates importer (TC 3.A.1.9.1) family. In terms of assembly, the complex is composed of two ATP-binding proteins (PhnC), two transmembrane proteins (PhnE) and a solute-binding protein (PhnD).

The protein resides in the cell inner membrane. The catalysed reaction is phosphonate(out) + ATP + H2O = phosphonate(in) + ADP + phosphate + H(+). In terms of biological role, part of the ABC transporter complex PhnCDE involved in phosphonates import. Responsible for energy coupling to the transport system. This Pseudomonas aeruginosa (strain ATCC 15692 / DSM 22644 / CIP 104116 / JCM 14847 / LMG 12228 / 1C / PRS 101 / PAO1) protein is Phosphonates import ATP-binding protein PhnC 1.